Here is a 193-residue protein sequence, read N- to C-terminus: Recombination protein RecR (193 aa).

The segment at 61-76 (CSSCNALSESEVCEIC) adopts a C4-type zinc-finger fold. The Toprim domain maps to 84–170 (SQLCMVLHPR…TFTKIAQGVP (87 aa)).

The protein belongs to the RecR family.

In terms of biological role, may play a role in DNA repair. It seems to be involved in an RecBC-independent recombinational process of DNA repair. It may act with RecF and RecO. The chain is Recombination protein RecR from Helicobacter pylori (strain G27).